The following is a 1416-amino-acid chain: 1-phosphatidylinositol 4,5-bisphosphate phosphodiesterase eta-2 (1416 aa).

The interval 1–155 (MSGPWPSPDS…WVTGLRYLMA (155 aa)) is necessary for plasma membrane localization. The region spanning 47 to 155 (GAMQEGMQMV…WVTGLRYLMA (109 aa)) is the PH domain. 2 consecutive EF-hand domains span residues 169–204 (TRDQ…LNVN) and 205–241 (LPRQ…MSTR). The Ca(2+) site is built by aspartate 182, asparagine 184, aspartate 186, serine 188, and glutamate 193. Residues 326 to 471 (QDMTQPLSHY…LKGKILVKGK (146 aa)) form the PI-PLC X-box domain. Histidine 341 is a catalytic residue. 3 residues coordinate Ca(2+): asparagine 342, glutamate 371, and aspartate 373. Histidine 385 is an active-site residue. A Ca(2+)-binding site is contributed by glutamate 420. Substrate-binding residues include lysine 469 and lysine 471. Serine 487 and serine 491 each carry phosphoserine. The segment at 535 to 620 (DPNNFSVSTL…RGATRQKKTM (86 aa)) is disordered. Positions 537–546 (NNFSVSTLSP) are enriched in polar residues. The segment covering 581-592 (SRRKKKGSKLKK) has biased composition (basic residues). Phosphoserine is present on residues serine 595 and serine 605. The 115-residue stretch at 626 to 740 (LSDLVKYTKS…GYVLKPGCMC (115 aa)) folds into the PI-PLC Y-box domain. Substrate is bound by residues serine 653 and arginine 680. A C2 domain is found at 740-869 (CQGVFNPNSE…PGYRHVYLEG (130 aa)). Ca(2+)-binding residues include isoleucine 784, aspartate 786, aspartate 810, aspartate 839, histidine 840, and aspartate 841. Disordered stretches follow at residues 905–1109 (GSLD…GGWR), 1121–1222 (YSDA…LQPR), and 1315–1405 (ITSP…GPAS). The span at 1011–1021 (APGPGPPPPAA) shows a compositional bias: pro residues. The segment covering 1073–1083 (GSQTDGRSQPR) has biased composition (polar residues). The span at 1143-1166 (VSSSSSMSSSDTVIDLSLPSLGLG) shows a compositional bias: low complexity. A compositionally biased stretch (polar residues) spans 1199 to 1208 (KSKSNPNLRA). Residues 1324–1333 (AGEGVAGGPG) are compositionally biased toward gly residues.

Ca(2+) is required as a cofactor. In terms of tissue distribution, expressed in retina and kidney.

It localises to the cytoplasm. The protein resides in the cell membrane. The catalysed reaction is a 1,2-diacyl-sn-glycero-3-phospho-(1D-myo-inositol-4,5-bisphosphate) + H2O = 1D-myo-inositol 1,4,5-trisphosphate + a 1,2-diacyl-sn-glycerol + H(+). With respect to regulation, activity is stimulated by GNB1:GNG2. In terms of biological role, the production of the second messenger molecules diacylglycerol (DAG) and inositol 1,4,5-trisphosphate (IP3) is mediated by activated phosphatidylinositol-specific phospholipase C enzymes. This phospholipase activity is very sensitive to calcium. May be important for formation and maintenance of the neuronal network in the postnatal brain. In Homo sapiens (Human), this protein is 1-phosphatidylinositol 4,5-bisphosphate phosphodiesterase eta-2.